An 813-amino-acid polypeptide reads, in one-letter code: Origin of replication complex subunit 1B (813 aa).

Positions 1-109 (MASTPRAKTF…TPKKKKKIDS (109 aa)) are disordered. Residues 11-21 (KSPTKTPSNIY) show a composition bias toward polar residues. A compositionally biased stretch (low complexity) spans 27 to 41 (SPSSTSHTPQTPETH). Residues 43–52 (PLRRSARHVS) are compositionally biased toward basic residues. The short motif at 83–90 (PRKPTTDV) is the Nuclear localization signal element. The interval 163-187 (DPEIEDCQICFKSDTNIMIECDDCL) is histone H3 binding. A PHD-type zinc finger spans residues 166 to 215 (IEDCQICFKSDTNIMIECDDCLGGFHLKCLKPPLKEVPEGDWICQFCEVK). 6 residues coordinate Zn(2+): cysteine 169, cysteine 172, cysteine 183, cysteine 186, histidine 191, and cysteine 194. Residues 203–207 (PEGDW) form a histone H3 binding region. Zn(2+) is bound by residues cysteine 209 and cysteine 212. The BAH domain occupies 226–344 (PKPPEGKKLA…VHWRSFKRLA (119 aa)). The interval 319 to 324 (ASNDGD) is histone H3 binding. A disordered region spans residues 349 to 372 (GDSDSDQEWNGRKEEEVDDSDEEM). The tract at residues 436–803 (PKSLPCRSKE…DDVAFALKDN (368 aa)) is necessary and sufficient for ORC complex assembly. 471–479 (GVPGTGKTI) contacts ATP. Mg(2+) contacts are provided by aspartate 561 and glutamate 562. Glutamate 562, asparagine 595, and arginine 660 together coordinate ATP.

The protein belongs to the ORC1 family. In terms of assembly, component of the origin recognition complex (ORC) composed of at least ORC1 (ORC1A or ORC1B), ORC2, ORC3, ORC4, ORC5 and ORC6. ORC is regulated in a cell-cycle and development dependent manner. It is sequentially assembled at the exit from anaphase of mitosis and disassembled as cells enter S phase. Interacts directly with ORC2 and ORC5. Binds mostly unmodified histone H3, and, with lower efficiency, H3K4me1 H3K4me2 and H3K4me3. In terms of tissue distribution, follow a cell-cycle regulation with a peak at the G1/S-phase. Mostly expressed in flower buds, and, to a lower exent, in roots, leaves and stems.

The protein localises to the nucleus. Its function is as follows. Essential protein required for ovules fertilization. Component of the origin recognition complex (ORC) that binds origins of replication. It has a role in both chromosomal replication and mating type transcriptional silencing. Binds to the ARS consensus sequence (ACS) of origins of replication. H3K4me3 effector that positively regulates the transcription of a subset of genes. The polypeptide is Origin of replication complex subunit 1B (Arabidopsis thaliana (Mouse-ear cress)).